The chain runs to 326 residues: MSKIIAVTMGDPAGIGPEIIIKSLAEGELSGASAVVVGCVQTMRRILALNVVPTVELKIIDKPADAVFAPGVINIIDEPLEDPQALKPGIVQAQAGDLAYRCIKKATALAMAGEVHAIATAPLNKEALHSAGHLYPGHTELLAKLTNSRDYAMVLYTDKLKVIHVSTHIALRKFLDTLNRDRVETVIEMADVFLKRVGFTHPRIAVAGVNPHAGENGLFGDEEIKIVSPSVEAMKAKGIDVYGPCPPDTVYLQAYEGQYDMVVAMYHDQGHIPLKLLGFYDGVNITAGLPFIRTSADHGTAFDIAWTGKAKPESMAISIQLAMQLA.

2 residues coordinate substrate: histidine 138 and threonine 139. Histidine 168, histidine 212, and histidine 267 together coordinate a divalent metal cation. Lysine 275, asparagine 284, and arginine 293 together coordinate substrate.

It belongs to the PdxA family. PdxA2 subfamily. Homodimer. Requires a divalent metal cation as cofactor.

The catalysed reaction is 4-O-phospho-D-threonate + NAD(+) = dihydroxyacetone phosphate + CO2 + NADH. Its function is as follows. Catalyzes the NAD-dependent oxidation and subsequent decarboxylation of D-threonate 4-phosphate to produce dihydroxyacetone phosphate (DHAP). Can also use 4-hydroxy-L-threonine 4-phosphate as substrate. The protein is D-threonate 4-phosphate dehydrogenase of Pectobacterium atrosepticum (strain SCRI 1043 / ATCC BAA-672) (Erwinia carotovora subsp. atroseptica).